The primary structure comprises 175 residues: ATP synthase subunit b (175 aa).

Residues 18 to 38 traverse the membrane as a helical segment; the sequence is VTSWEPFVANLIAFILMVVIL.

Belongs to the ATPase B chain family. F-type ATPases have 2 components, F(1) - the catalytic core - and F(0) - the membrane proton channel. F(1) has five subunits: alpha(3), beta(3), gamma(1), delta(1), epsilon(1). F(0) has three main subunits: a(1), b(2) and c(10-14). The alpha and beta chains form an alternating ring which encloses part of the gamma chain. F(1) is attached to F(0) by a central stalk formed by the gamma and epsilon chains, while a peripheral stalk is formed by the delta and b chains.

It localises to the cell inner membrane. F(1)F(0) ATP synthase produces ATP from ADP in the presence of a proton or sodium gradient. F-type ATPases consist of two structural domains, F(1) containing the extramembraneous catalytic core and F(0) containing the membrane proton channel, linked together by a central stalk and a peripheral stalk. During catalysis, ATP synthesis in the catalytic domain of F(1) is coupled via a rotary mechanism of the central stalk subunits to proton translocation. In terms of biological role, component of the F(0) channel, it forms part of the peripheral stalk, linking F(1) to F(0). This Akkermansia muciniphila (strain ATCC BAA-835 / DSM 22959 / JCM 33894 / BCRC 81048 / CCUG 64013 / CIP 107961 / Muc) protein is ATP synthase subunit b.